The sequence spans 230 residues: Potassium/proton antiporter CemA (230 aa).

4 helical membrane passes run 7–27 (LPSF…SFSF), 106–126 (IILH…SFFL), 145–165 (LNDS…VGFH), and 181–201 (LGWV…PVIL).

Belongs to the CemA family.

Its subcellular location is the plastid. The protein resides in the chloroplast inner membrane. It carries out the reaction K(+)(in) + H(+)(out) = K(+)(out) + H(+)(in). In terms of biological role, contributes to K(+)/H(+) antiport activity by supporting proton efflux to control proton extrusion and homeostasis in chloroplasts in a light-dependent manner to modulate photosynthesis. Prevents excessive induction of non-photochemical quenching (NPQ) under continuous-light conditions. Indirectly promotes efficient inorganic carbon uptake into chloroplasts. This Oryza nivara (Indian wild rice) protein is Potassium/proton antiporter CemA.